The primary structure comprises 205 residues: MTNIVWHQHPVDQAARAEQKGQNPVLLWFTGLSGAGKSTLAGALERALFEAGFHTYLLDGDNVRHGLCKDLGFTVEDRDENLRRVGEVAKLMVDAGLVVLSAFISPTREERDSIRARFPVSQFIEVHVSTPLSVCEQRDPKGLYVKARSGEISNFTGISSPYEAPLAAELTIDTSKGDLVTQVRALIDYLTAINVINADKAKALA.

ATP is bound at residue 31-38 (GLSGAGKS). S105 functions as the Phosphoserine intermediate in the catalytic mechanism.

It belongs to the APS kinase family.

It carries out the reaction adenosine 5'-phosphosulfate + ATP = 3'-phosphoadenylyl sulfate + ADP + H(+). It functions in the pathway sulfur metabolism; hydrogen sulfide biosynthesis; sulfite from sulfate: step 2/3. In terms of biological role, catalyzes the synthesis of activated sulfate. The protein is Adenylyl-sulfate kinase of Shewanella baltica (strain OS195).